Here is a 39-residue protein sequence, read N- to C-terminus: Natriuretic peptide PaNP-d (39 aa).

Residues 1–8 constitute a propeptide that is removed on maturation; sequence SGSKTAEI. Residues 1–39 are disordered; that stretch reads SGSKTAEIDDGCFGLPLDPIGSTSGMGCRSVPKPIPGGS. C12 and C28 are disulfide-bonded.

It belongs to the natriuretic peptide family. In terms of tissue distribution, expressed by the venom gland.

The protein localises to the secreted. Its function is as follows. Snake venom natriuretic peptide that targets both NPR1 and NPR2. Exhibits hypotensive and vasodepressor activities. This is Natriuretic peptide PaNP-d from Pseudechis australis (Mulga snake).